We begin with the raw amino-acid sequence, 102 residues long: RNA-binding protein Hfq (102 aa).

One can recognise a Sm domain in the interval 9–68; the sequence is DPFLNALRRERVPVSIYLVNGIKLQGQIESFDQFVILLKNTVSQMVYKHAISTVVPSRPV. Positions 63 to 102 are disordered; the sequence is VPSRPVSHHSNNAGGGTSSNYHHGSSAQGTSAQQDSEETE. Residues 70-96 show a composition bias toward polar residues; it reads HHSNNAGGGTSSNYHHGSSAQGTSAQQ.

This sequence belongs to the Hfq family. Homohexamer.

Its function is as follows. RNA chaperone that binds small regulatory RNA (sRNAs) and mRNAs to facilitate mRNA translational regulation in response to envelope stress, environmental stress and changes in metabolite concentrations. Also binds with high specificity to tRNAs. This chain is RNA-binding protein Hfq, found in Citrobacter koseri (strain ATCC BAA-895 / CDC 4225-83 / SGSC4696).